A 519-amino-acid chain; its full sequence is Tetratricopeptide repeat protein 31 (519 aa).

The stretch at 147-197 (QKLLVTEEEANRLAEELVAEEERMKQKAEKKRLKKKRQKERKRQERLEQYC) forms a coiled coil. The segment covering 175-187 (EKKRLKKKRQKER) has biased composition (basic residues). 2 disordered regions span residues 175-230 (EKKR…EEDS) and 253-294 (RREK…VQAS). A Phosphoserine modification is found at Ser-278. 3 TPR repeats span residues 305–338 (SQEL…NPQD), 339–372 (HRLF…RPGW), and 373–406 (PRGL…GSQP). The interval 474 to 506 (PSCHRSHPNQPLSQTQSRRPHPLKPQDPSKGWD) is disordered. Positions 481 to 490 (PNQPLSQTQS) are enriched in polar residues.

In Homo sapiens (Human), this protein is Tetratricopeptide repeat protein 31 (TTC31).